The chain runs to 172 residues: Phosphopantetheine adenylyltransferase (172 aa).

Residue Ser9 coordinates substrate. ATP contacts are provided by residues 9–10 (SF) and His17. Residues Lys41, Leu78, and Arg92 each coordinate substrate. ATP contacts are provided by residues 93 to 95 (GLR), Glu103, and 128 to 134 (GRAITST).

The protein belongs to the bacterial CoaD family. In terms of assembly, homohexamer. Mg(2+) is required as a cofactor.

It localises to the cytoplasm. The catalysed reaction is (R)-4'-phosphopantetheine + ATP + H(+) = 3'-dephospho-CoA + diphosphate. Its pathway is cofactor biosynthesis; coenzyme A biosynthesis; CoA from (R)-pantothenate: step 4/5. Functionally, reversibly transfers an adenylyl group from ATP to 4'-phosphopantetheine, yielding dephospho-CoA (dPCoA) and pyrophosphate. This is Phosphopantetheine adenylyltransferase from Bartonella quintana (strain Toulouse) (Rochalimaea quintana).